A 127-amino-acid polypeptide reads, in one-letter code: Large ribosomal subunit protein bL17 (127 aa).

Belongs to the bacterial ribosomal protein bL17 family. In terms of assembly, part of the 50S ribosomal subunit. Contacts protein L32.

This chain is Large ribosomal subunit protein bL17, found in Photobacterium profundum (strain SS9).